The sequence spans 246 residues: UDP-N-acetyl-D-mannosaminuronic acid transferase (246 aa).

Belongs to the glycosyltransferase 26 family.

It catalyses the reaction UDP-N-acetyl-alpha-D-mannosaminouronate + N-acetyl-alpha-D-glucosaminyl-di-trans,octa-cis-undecaprenyl diphosphate = beta-D-ManNAcA-(1-&gt;4)-alpha-D-GlcNAc-di-trans,octa-cis-undecaprenyl diphosphate + UDP + H(+). It participates in bacterial outer membrane biogenesis; enterobacterial common antigen biosynthesis. Catalyzes the synthesis of Und-PP-GlcNAc-ManNAcA (Lipid II), the second lipid-linked intermediate involved in enterobacterial common antigen (ECA) synthesis. The sequence is that of UDP-N-acetyl-D-mannosaminuronic acid transferase from Escherichia coli O7:K1 (strain IAI39 / ExPEC).